The primary structure comprises 325 residues: Cell division protein ZipA (325 aa).

At 1-5 the chain is on the periplasmic side; that stretch reads MQELR. The chain crosses the membrane as a helical span at residues 6-26; that stretch reads LVLILVGALAIAALLFHGLWT. Over 27–325 the chain is Cytoplasmic; it reads SRKETSSKFG…KQRVKVFCRK (299 aa).

It belongs to the ZipA family. As to quaternary structure, interacts with FtsZ via their C-terminal domains.

The protein resides in the cell inner membrane. Essential cell division protein that stabilizes the FtsZ protofilaments by cross-linking them and that serves as a cytoplasmic membrane anchor for the Z ring. Also required for the recruitment to the septal ring of downstream cell division proteins. This chain is Cell division protein ZipA, found in Aliivibrio fischeri (strain MJ11) (Vibrio fischeri).